We begin with the raw amino-acid sequence, 532 residues long: MKTSEERLLAPDSLPPDLAPAPVPQGSPAEKNTDFEPVPPPCGGDDQPQLATDPVASLVVSQELQQGDSVPLEVEFNTSSELSPGIEEQDVSEHASLPGEETNLPELESGEATEGVSEERAEVDEGDTFWTYSFSQVPRYLSGSWSEFSTRSENFLKGCKWAPDGSCILTNSADNVLRIYNLPPELYSEQEQVDYAEMVPVLRMVEGDTIYDYCWYSLMSSTQPDTSYVASSSRENPIHIWDAFTGELRASFRAYNHLDELTAAHSLCFSPDGSQLFCGFNRTVRVFSTSRPGRDCEVRATFAKKQGQSGIISCIAFSPSQPLYACGSYGRTIGLYAWDDGSPLALLGGHQGGITHLCFHPDGNLFFSGARKDAELLCWDLRQPGHLLWSLSREVTTNQRIYFDLDPSGQFLVSGNTSGVVSVWDISGALSDDSKLEPVVTFLPQKDCTNGVSLHPTLPLLATASGQRVFPEPTNSGDEGELELELPLLSLCHAHPECQLQLWWCGGGPDPSSPVDDQDEKGQRRTEAVGMS.

The segment at 1-53 is disordered; it reads MKTSEERLLAPDSLPPDLAPAPVPQGSPAEKNTDFEPVPPPCGGDDQPQLATD. Residues 13–25 are compositionally biased toward pro residues; the sequence is SLPPDLAPAPVPQ. Phosphoserine is present on residues Ser27, Ser61, and Ser83. Residues 80–122 form a disordered region; that stretch reads SELSPGIEEQDVSEHASLPGEETNLPELESGEATEGVSEERAE. 6 WD repeats span residues 151–190, 206–251, 256–297, 307–348, 349–389, and 395–434; these read RSEN…YSEQ, EGDT…LRAS, NHLD…RDCE, GQSG…ALLG, GHQG…HLLW, and VTTN…SDDS. Thr474 bears the Phosphothreonine mark. Ser476 is modified (phosphoserine). The tract at residues 510–532 is disordered; that stretch reads DPSSPVDDQDEKGQRRTEAVGMS. A compositionally biased stretch (basic and acidic residues) spans 520-532; it reads EKGQRRTEAVGMS.

Belongs to the TCAB1 family. Component of the telomerase holoenzyme complex composed of one molecule of TERT, one molecule of WRAP53/TCAB1, two molecules of H/ACA ribonucleoprotein complex subunits DKC1, NOP10, NHP2 and GAR1, and a telomerase RNA template component (TERC). The telomerase holoenzyme complex is associated with TEP1, SMG6/EST1A and POT1. Interacts with the chaperonin-containing T-complex (TRiC) complex; which mediates the folding of WRAP53/TCAB1. Interacts with COIL. Interacts with SMN1. Interacts with RNF8. Interacts with histone H2AX. Post-translationally, phosphorylated at Ser-61 by ATM in response to DNA damage, promoting its interaction with histone H2AX and localization to sites of DNA double-strand breaks.

The protein resides in the nucleus. The protein localises to the cajal body. It is found in the chromosome. It localises to the telomere. RNA chaperone that plays a key role in telomere maintenance and RNA localization to Cajal bodies. Specifically recognizes and binds the Cajal body box (CAB box) present in both small Cajal body RNAs (scaRNAs) and telomerase RNA template component (TERC). Essential component of the telomerase holoenzyme complex, a ribonucleoprotein complex essential for the replication of chromosome termini that elongates telomeres in most eukaryotes. In the telomerase holoenzyme complex, required to stimulate the catalytic activity of the complex. Acts by specifically binding the CAB box of the TERC RNA and controlling the folding of the CR4/CR5 region of the TERC RNA, a critical step for telomerase activity. In addition, also controls telomerase holoenzyme complex localization to Cajal body. During S phase, required for delivery of TERC to telomeres during S phase and for telomerase activity. In addition to its role in telomere maintenance, also required for Cajal body formation, probably by mediating localization of scaRNAs to Cajal bodies. Also plays a role in DNA repair: phosphorylated by ATM in response to DNA damage and relocalizes to sites of DNA double-strand breaks to promote the repair of DNA double-strand breaks. Acts by recruiting the ubiquitin ligase RNF8 to DNA breaks and promote both homologous recombination (HR) and non-homologous end joining (NHEJ). The polypeptide is Telomerase Cajal body protein 1 (Mus musculus (Mouse)).